Consider the following 138-residue polypeptide: Large ribosomal subunit protein bL19 (138 aa).

The protein belongs to the bacterial ribosomal protein bL19 family.

Functionally, this protein is located at the 30S-50S ribosomal subunit interface and may play a role in the structure and function of the aminoacyl-tRNA binding site. The sequence is that of Large ribosomal subunit protein bL19 from Rickettsia canadensis (strain McKiel).